Consider the following 504-residue polypeptide: Cytochrome P450 71B7 (504 aa).

The helical transmembrane segment at methionine 1 to leucine 21 threads the bilayer. A Glycyl lysine isopeptide (Lys-Gly) (interchain with G-Cter in ubiquitin) cross-link involves residue lysine 82. Cysteine 446 provides a ligand contact to heme.

This sequence belongs to the cytochrome P450 family. Requires heme as cofactor. Highly expressed in rosette leaves. Also expressed in roots, leaves, flowers, and siliques.

The protein localises to the membrane. This is Cytochrome P450 71B7 (CYP71B7) from Arabidopsis thaliana (Mouse-ear cress).